Consider the following 214-residue polypeptide: Thymidylate kinase (214 aa).

14–21 (GLEGAGKT) contacts ATP.

Belongs to the thymidylate kinase family.

It catalyses the reaction dTMP + ATP = dTDP + ADP. Phosphorylation of dTMP to form dTDP in both de novo and salvage pathways of dTTP synthesis. This is Thymidylate kinase from Mannheimia succiniciproducens (strain KCTC 0769BP / MBEL55E).